The following is a 493-amino-acid chain: MTELTDLSLADARDALRQKKISAAELAMAHIEAVEKARALNAFLLETPERAQAMARASDEKIARGEAGPLEGIPLGIKDLFCTEGVRTTAASHILENFVPAYESSITANLWRDGAVMLGKLNLDEFAMGSSNETSYFGPVVSPWRREGSTAPLTPGGSSGGSAAAVAARLCLGATATDTGGSIRQPAAFTGTVGIKPTYGRCSRWGVVAFASSLDQAGPITRTVRDAAILLRSMAGYDPKDTTSVNLPVPDYEAALGRSIKGMRIGIPKEYRLDAMPAEIGKLWDQGIEWMREAGAEPVEISLPHTRHALPAYYIVAPAEASSNLARYDGVRFGLRVPGKDIAGMYEETRAAGFGKEVRRRILIGTYVLSAGYYDAYYVRAQKIRTLIKRDFEQVFEQGIDAILTPATPSAAFGLGEKGAKDPIEMYLNDIFTVTVNMAGLPGIAVPAGVSAEGLPLGLQLIGRPFDEETLIALSGVIEAAAPRVSYPSSWWG.

Catalysis depends on charge relay system residues Lys-78 and Ser-158. Catalysis depends on Ser-182, which acts as the Acyl-ester intermediate.

It belongs to the amidase family. GatA subfamily. Heterotrimer of A, B and C subunits.

The catalysed reaction is L-glutamyl-tRNA(Gln) + L-glutamine + ATP + H2O = L-glutaminyl-tRNA(Gln) + L-glutamate + ADP + phosphate + H(+). In terms of biological role, allows the formation of correctly charged Gln-tRNA(Gln) through the transamidation of misacylated Glu-tRNA(Gln) in organisms which lack glutaminyl-tRNA synthetase. The reaction takes place in the presence of glutamine and ATP through an activated gamma-phospho-Glu-tRNA(Gln). The chain is Glutamyl-tRNA(Gln) amidotransferase subunit A from Beijerinckia indica subsp. indica (strain ATCC 9039 / DSM 1715 / NCIMB 8712).